The sequence spans 231 residues: MVKLVFARHGESEWNKANLFTGWADVDLSEKGTQQAIDAGKLIKEAGIAFDLAFTSVLKRAIKTTNLALEYSDQLWVPVEKSWRLNERHYGGLTGKNKAEAAEQFGDEQVHIWRRSYDVLPPDMAKDDEHSAHTDRRYAHLDHSVIPDAENLKVTLERALPFWEDKIAPALVDGKNVFVGAHGNSIRALVKHIKQLSDDEIMNVEIPNFPPLVFEFDDKLNLTAEYYLGGE.

Substrate contacts are provided by residues 8–15, 21–22, Arg60, 87–90, Lys98, 114–115, and 183–184; these read RHGESEWN, TG, ERHY, RR, and GN. Catalysis depends on His9, which acts as the Tele-phosphohistidine intermediate. The active-site Proton donor/acceptor is the Glu87.

It belongs to the phosphoglycerate mutase family. BPG-dependent PGAM subfamily.

It catalyses the reaction (2R)-2-phosphoglycerate = (2R)-3-phosphoglycerate. It functions in the pathway carbohydrate degradation; glycolysis; pyruvate from D-glyceraldehyde 3-phosphate: step 3/5. Catalyzes the interconversion of 2-phosphoglycerate and 3-phosphoglycerate. The polypeptide is 2,3-bisphosphoglycerate-dependent phosphoglycerate mutase (Streptococcus equi subsp. zooepidemicus (strain H70)).